We begin with the raw amino-acid sequence, 120 residues long: UPF0102 protein TW312 (120 aa).

The protein belongs to the UPF0102 family.

The sequence is that of UPF0102 protein TW312 from Tropheryma whipplei (strain TW08/27) (Whipple's bacillus).